Consider the following 190-residue polypeptide: MSGKWRLVLTGIGNPEPQYAGTRHNVGLYMLELLRKRLGLQGRTYSPVPNTGGKVHYIEDEHCTILRSDGQYMNLSGEQVCKVWARYAKYQARHVVIHDELSVACGKVQLRAPSTSIRGHNGLRSLLKCSGGRVPFAKLAIGIGREPGSRSRDPASVSRWVLGALTPQELQTLLTQSEPAAWRALTQYIS.

Y19 lines the tRNA pocket. The active-site Proton acceptor is the H24. 3 residues coordinate tRNA: Y72, N74, and N121.

Belongs to the PTH family.

The protein resides in the mitochondrion. The enzyme catalyses an N-acyl-L-alpha-aminoacyl-tRNA + H2O = an N-acyl-L-amino acid + a tRNA + H(+). Its function is as follows. Peptidyl-tRNA hydrolase involved in the recycling of tRNA-Lys from diacetyl-lysyl-tRNA-Lys and is important for mitochondrial function. This chain is Peptidyl-tRNA hydrolase (PTH1), found in Saccharomyces cerevisiae (strain ATCC 204508 / S288c) (Baker's yeast).